The primary structure comprises 64 residues: MFKLLVVVFAALFAAALAVPAPVARANPAPIPIASPEPAPQYYYGASPYAYSGGYYDSPYSYYG.

The first 18 residues, 1–18 (MFKLLVVVFAALFAAALA), serve as a signal peptide directing secretion. 2 propeptides span residues 19 to 40 (VPAPVARANPAPIPIASPEPAP) and 63 to 64 (YG).

Its subcellular location is the secreted. The protein is Neuropeptide-like 4 (Nplp4) of Drosophila melanogaster (Fruit fly).